A 257-amino-acid chain; its full sequence is Chymotrypsin-like elastase family member 3B (257 aa).

The segment at residues 1–2 is a signal peptide (or 3); the sequence is VA. A propeptide spans 3-15 (activation peptide); the sequence is SGYGPPSSHPSSR. The Peptidase S1 domain occupies 16–255; it reads VVNGEDAVPY…FIDWIEETIA (240 aa). Asparagine 38 is a glycosylation site (N-linked (GlcNAc...) asparagine). Disulfide bonds link cysteine 45/cysteine 61 and cysteine 104/cysteine 107. Histidine 60 functions as the Charge relay system in the catalytic mechanism. The active-site Charge relay system is the aspartate 110. 3 disulfide bridges follow: cysteine 144–cysteine 210, cysteine 175–cysteine 191, and cysteine 200–cysteine 231. Residue serine 204 is the Charge relay system of the active site.

The protein belongs to the peptidase S1 family. Elastase subfamily.

It carries out the reaction Preferential cleavage: Ala-|-Xaa. Does not hydrolyze elastin.. Its function is as follows. Efficient protease with alanine specificity but only little elastolytic activity. This Macaca mulatta (Rhesus macaque) protein is Chymotrypsin-like elastase family member 3B (CELA3B).